A 1213-amino-acid polypeptide reads, in one-letter code: MVDVNRFKSMQITLASPSKVRSWSYGEVKKPETINYRTLKPEREGLFDEVIFGPTKDWECACGKYKRIRYKGIVCDRCGVEVTRAKVRRERMGHIELKAPVSHIWYFKGIPSRMGLTLDMSPRALEEVIYFAAYVVIDPKDTPLEPKSLLTEREYREKLQEYGHGSFVAKMGAEAIQDLLKRVDLAAEIAELKEELKSASGQKRIKAVRRLDVLDAFNKSGNKPEWMVLNILPVIPPDLRPMVQLDGGRFAASDLNDLYRRVINRNNRLARLLELNAPGIIVQNEKRMLQEAVDALIDNGRRGRPITGPGSRPLKSLSHMLKGKQGRFRQNLLGKRVDFSGRSVIAVGPTLKMYQCGVPREMAIELFKPFVMREIVAKEYAGNVKAAKRMVERGDERIWDILEEVIKEHPVLLNRAPTLHRLGIQAFEPVLIDGKALRLHPLVCEAYNADFDGDQMAIHVPLSEEAQAEARLLMLAAEHILNPKDGKPVVTPSQDMVLGNYYLTMEDAGREGEGMIFKDKDEAVMAYRNGYAHLHSRVGIAVDSMPNKPWKDSQRHKIMVTTVGKILFNDIMPEDLPYLQEPNNANLTEGTPDKYFLEPGQDIQEVIDRLDINVPFKKKNLGNIIAETFKRFRTTETSAFLDRLKDLGYYHSTLAGLTVGIADIPVIDNKAEIIDAAHHRVEEINKAFRRGLMTDDDRYVAVTTTWREAKEALEKRLIETQDPKNPIVMMMDSGARGNISNFSQLAGMRGLMAAPNGRIMELPILSNFREGLSVLEMFFSTHGARKGMTDTALKTADSGYLTRRLVDVAQDVIIREDDCGTDRGLLIRAITDGKEVTETLEERLQGRYTRKSVKHPETGEVLIGADQLITEDMARKIVDAGVEEVTIRSVFTCATRHGVCRHCYGINLATGDAVEVGEAVGTIAAQSIGEPGTQLTMRTFHTGGVASNTDITQGLPRIQEIFEARNPKGEAVITEVKGNVVEIEEDASTRTKKVYVQGKTGMGEYVVPFTARMKVEVGDEVNRGAALTEGSIQPKRLLEVRDTLSVETYLLAEVQKVYRSQGVEIGDKHVEVMVRQMLRKVRVMDPGDTDLLPGTLMDISDFTDANKDIVISGGIPATSRPVLMGITKASLETNSFLSAASFQETTRVLTDAAIRGKKDHLLGLKENVIIGKIIPAGTGMARYRNIEPQAMNEIEVIDHTEVSAEAVFTAEAE.

4 residues coordinate Zn(2+): C60, C62, C75, and C78. Positions 450, 452, and 454 each coordinate Mg(2+). Positions 819, 893, 900, and 903 each coordinate Zn(2+).

This sequence belongs to the RNA polymerase beta' chain family. In terms of assembly, the RNAP catalytic core consists of 2 alpha, 1 beta, 1 beta' and 1 omega subunit. When a sigma factor is associated with the core the holoenzyme is formed, which can initiate transcription. Mg(2+) serves as cofactor. Zn(2+) is required as a cofactor.

It catalyses the reaction RNA(n) + a ribonucleoside 5'-triphosphate = RNA(n+1) + diphosphate. Functionally, DNA-dependent RNA polymerase catalyzes the transcription of DNA into RNA using the four ribonucleoside triphosphates as substrates. The polypeptide is DNA-directed RNA polymerase subunit beta' (Streptococcus pyogenes serotype M28 (strain MGAS6180)).